Consider the following 31-residue polypeptide: MESFAYVLILTFAIATLFFAIAFRDPPKIGK.

Residues 3-23 (SFAYVLILTFAIATLFFAIAF) form a helical membrane-spanning segment.

It belongs to the PsbT family. In terms of assembly, PSII is composed of 1 copy each of membrane proteins PsbA, PsbB, PsbC, PsbD, PsbE, PsbF, PsbH, PsbI, PsbJ, PsbK, PsbL, PsbM, PsbT, PsbX, PsbY, PsbZ, Psb30/Ycf12, peripheral proteins PsbO, CyanoQ (PsbQ), PsbU, PsbV and a large number of cofactors. It forms dimeric complexes.

The protein localises to the cellular thylakoid membrane. Found at the monomer-monomer interface of the photosystem II (PS II) dimer, plays a role in assembly and dimerization of PSII. PSII is a light-driven water plastoquinone oxidoreductase, using light energy to abstract electrons from H(2)O, generating a proton gradient subsequently used for ATP formation. The sequence is that of Photosystem II reaction center protein T from Synechococcus sp. (strain CC9902).